Consider the following 427-residue polypeptide: 3-phosphoshikimate 1-carboxyvinyltransferase (427 aa).

Lys22, Ser23, and Arg27 together coordinate 3-phosphoshikimate. Lys22 provides a ligand contact to phosphoenolpyruvate. Positions 96 and 124 each coordinate phosphoenolpyruvate. Ser170, Ser171, Gln172, Ser198, Asp313, Asn336, and Lys340 together coordinate 3-phosphoshikimate. Gln172 is a binding site for phosphoenolpyruvate. Asp313 (proton acceptor) is an active-site residue. Phosphoenolpyruvate is bound by residues Arg344, Arg386, and Lys411.

Belongs to the EPSP synthase family. Monomer.

The protein localises to the cytoplasm. It carries out the reaction 3-phosphoshikimate + phosphoenolpyruvate = 5-O-(1-carboxyvinyl)-3-phosphoshikimate + phosphate. The protein operates within metabolic intermediate biosynthesis; chorismate biosynthesis; chorismate from D-erythrose 4-phosphate and phosphoenolpyruvate: step 6/7. In terms of biological role, catalyzes the transfer of the enolpyruvyl moiety of phosphoenolpyruvate (PEP) to the 5-hydroxyl of shikimate-3-phosphate (S3P) to produce enolpyruvyl shikimate-3-phosphate and inorganic phosphate. In Aeromonas salmonicida (strain A449), this protein is 3-phosphoshikimate 1-carboxyvinyltransferase.